Reading from the N-terminus, the 217-residue chain is Large ribosomal subunit protein bL21m (217 aa).

Positions 61–81 are enriched in low complexity; sequence PPKVTTATTPEAPAAVPTSTP. The segment at 61–87 is disordered; the sequence is PPKVTTATTPEAPAAVPTSTPFSQQPP.

This sequence belongs to the bacterial ribosomal protein bL21 family. As to quaternary structure, component of the mitochondrial large ribosomal subunit (mt-LSU). Mature N.crassa 74S mitochondrial ribosomes consist of a small (37S) and a large (54S) subunit. The 37S small subunit contains a 16S ribosomal RNA (16S mt-rRNA) and 32 different proteins. The 54S large subunit contains a 23S rRNA (23S mt-rRNA) and 42 different proteins.

The protein localises to the mitochondrion. Component of the mitochondrial ribosome (mitoribosome), a dedicated translation machinery responsible for the synthesis of mitochondrial genome-encoded proteins, including at least some of the essential transmembrane subunits of the mitochondrial respiratory chain. The mitoribosomes are attached to the mitochondrial inner membrane and translation products are cotranslationally integrated into the membrane. This is Large ribosomal subunit protein bL21m (mrpl49) from Neurospora crassa (strain ATCC 24698 / 74-OR23-1A / CBS 708.71 / DSM 1257 / FGSC 987).